An 85-amino-acid chain; its full sequence is Transcriptional repressor protein KorC (85 aa).

The segment at residues 28 to 47 (EVLRLAGLTGGKAAKVLGLG) is a DNA-binding region (H-T-H motif).

Acts with KorA as corepressor in the control of the kilC and kilE operons. The polypeptide is Transcriptional repressor protein KorC (korC) (Escherichia coli).